The following is a 77-amino-acid chain: Translation initiation factor IF-1, chloroplastic (77 aa).

The S1-like domain occupies 1 to 71 (MKEQKLIHEG…TRGRIIYRLR (71 aa)).

It belongs to the IF-1 family. Component of the 30S ribosomal translation pre-initiation complex which assembles on the 30S ribosome in the order IF-2 and IF-3, IF-1 and N-formylmethionyl-tRNA(fMet); mRNA recruitment can occur at any time during PIC assembly.

Its subcellular location is the plastid. It is found in the chloroplast. Functionally, one of the essential components for the initiation of protein synthesis. Stabilizes the binding of IF-2 and IF-3 on the 30S subunit to which N-formylmethionyl-tRNA(fMet) subsequently binds. Helps modulate mRNA selection, yielding the 30S pre-initiation complex (PIC). Upon addition of the 50S ribosomal subunit IF-1, IF-2 and IF-3 are released leaving the mature 70S translation initiation complex. This Asarum canadense (Wild ginger) protein is Translation initiation factor IF-1, chloroplastic.